Reading from the N-terminus, the 901-residue chain is HTH-type transcriptional regulator MalT (901 aa).

Ser39–Thr46 contacts ATP. The HTH luxR-type domain occupies Glu829–Leu894. Positions Asn853–Arg872 form a DNA-binding region, H-T-H motif.

Belongs to the MalT family. As to quaternary structure, monomer in solution. Oligomerizes to an active state in the presence of the positive effectors ATP and maltotriose.

Its activity is regulated as follows. Activated by ATP and maltotriose, which are both required for DNA binding. Its function is as follows. Positively regulates the transcription of the maltose regulon whose gene products are responsible for uptake and catabolism of malto-oligosaccharides. Specifically binds to the promoter region of its target genes, recognizing a short DNA motif called the MalT box. In Salmonella agona (strain SL483), this protein is HTH-type transcriptional regulator MalT.